The chain runs to 419 residues: MDKFRVQGPTKLQGEVTISGAKNAALPILFAALLAEEPVEIQNVPKLKDVDTSMKLLSQLGAKVERNGSVHIDARDVNVFCAPYDLVKTMRASIWALGPLVARFGQGQVSLPGGCTIGARPVDLHISGLEQLGATIKLEEGYVKASVDGRLKGAHIVMDKVSVGATVTIMCAATLAEGTTIIENAAREPEIVDTANFLITLGAKISGQGTDRIVIEGVERLGGGVYRVLPDRIETGTFLVAAAISRGKIICRNTQPDTLDAVLAKLRDAGADIEVGEDWISLDMHGKRPKAVNVRTAPHPAFPTDMQAQFTLLNLVAEGTGFITETVFENRFMHVPELSRMGAHAEIESNTVICHGVEKLSGAQVMATDLRASASLVLAGCIAEGTTVVDRIYHIDRGYERIEDKLRALGANIERVKGE.

22–23 (KN) contacts phosphoenolpyruvate. A UDP-N-acetyl-alpha-D-glucosamine-binding site is contributed by Arg91. Cys115 serves as the catalytic Proton donor. Cys115 bears the 2-(S-cysteinyl)pyruvic acid O-phosphothioketal mark. UDP-N-acetyl-alpha-D-glucosamine is bound by residues 120-124 (RPVDL), 160-163 (KVSV), Asp305, and Val327.

Belongs to the EPSP synthase family. MurA subfamily.

The protein localises to the cytoplasm. The catalysed reaction is phosphoenolpyruvate + UDP-N-acetyl-alpha-D-glucosamine = UDP-N-acetyl-3-O-(1-carboxyvinyl)-alpha-D-glucosamine + phosphate. It functions in the pathway cell wall biogenesis; peptidoglycan biosynthesis. Its function is as follows. Cell wall formation. Adds enolpyruvyl to UDP-N-acetylglucosamine. The chain is UDP-N-acetylglucosamine 1-carboxyvinyltransferase from Escherichia coli O157:H7.